The chain runs to 460 residues: Solute carrier family 52, riboflavin transporter, member 3 (460 aa).

Residues 1–6 (MAFLTH) lie on the Cytoplasmic side of the membrane. A helical membrane pass occupies residues 7-27 (LLVCVFGMGSWVAINGLWVEL). The Extracellular segment spans residues 28–37 (PLLVTELPEA). The chain crosses the membrane as a helical span at residues 38 to 58 (WYLPSYLTVVIQLANIGPLLV). The Cytoplasmic portion of the chain corresponds to 59-71 (TLMHRFRPGCLSE). Residues 72 to 92 (VPVIFLILCVGTAACILLAFL) traverse the membrane as a helical segment. Topologically, residues 93-105 (WNVTSWIQGGQHS) are extracellular. Asparagine 94 carries an N-linked (GlcNAc...) asparagine glycan. The helical transmembrane segment at 106–126 (VAFIVLTFFLALVDCTSSVTF) threads the bilayer. The Cytoplasmic segment spans residues 127-137 (LPFMSQLPTYY). A helical transmembrane segment spans residues 138 to 158 (LTTFFIGEGLSGLLPALVALV). Residues 159-211 (QGSGITTCVNVTETPGTTLNTMETPITQGNLSPSLPSPSWHQESRYLAPRFSP) are Extracellular-facing. Asparagine 168 carries N-linked (GlcNAc...) asparagine glycosylation. The chain crosses the membrane as a helical span at residues 212 to 232 (LLFFLLLSFLTGCCLVAFFLL). The Cytoplasmic segment spans residues 233-291 (QRQPWGRQGSIEDLLHSQVTLHSIRPRDTEDTSSLGAPVSSPGKGSVEASVASLRPAQL). Phosphoserine is present on residues serine 242 and serine 266. Residues 292–312 (AFIYSVVAFVNALTNGVLPSV) traverse the membrane as a helical segment. Residues 313 to 326 (QTYSCLPYGPVAYH) lie on the Extracellular side of the membrane. Residues 327–347 (LSATLSSVASPLACFLPIFLP) form a helical membrane-spanning segment. Residues 348 to 350 (NRS) are Cytoplasmic-facing. A helical transmembrane segment spans residues 351–371 (LLFLGVLTVLGTGFGAYNMAM). The Extracellular portion of the chain corresponds to 372–387 (AAMSPCPVLQGHWGGE). Cysteine 377 and cysteine 454 are oxidised to a cystine. A helical membrane pass occupies residues 388–408 (VLIVLSWVLFAACLSYVKVML). Topologically, residues 409–418 (GVILRDRSRS) are cytoplasmic. A helical membrane pass occupies residues 419-439 (ALLWCGAAVQLGSLIGALLMF). The Extracellular segment spans residues 440–460 (PLVNVLKLFSSADYCSLDCSV).

The protein belongs to the riboflavin transporter family. In terms of tissue distribution, within the small intestine, it is particularly expressed in the jujenum and the ileum. Almost negligible expression in the stomach, duodenum, and large intestine.

The protein resides in the cell membrane. It carries out the reaction riboflavin(in) = riboflavin(out). Its function is as follows. Plasma membrane transporter mediating the uptake by cells of the water soluble vitamin B2/riboflavin that plays a key role in biochemical oxidation-reduction reactions of the carbohydrate, lipid, and amino acid metabolism. This chain is Solute carrier family 52, riboflavin transporter, member 3 (Slc52a3), found in Mus musculus (Mouse).